A 184-amino-acid chain; its full sequence is Putative rRNA methyltransferase YlbH (184 aa).

Residues 1–22 form a disordered region; sequence MRVISGSKKGRSLKAVAGTSTR.

Belongs to the methyltransferase superfamily. RsmD family.

May catalyze the S-adenosyl-L-methionine-dependent methylation of a specific base in rRNA. This Bacillus subtilis (strain 168) protein is Putative rRNA methyltransferase YlbH (ylbH).